The sequence spans 315 residues: Calcium homeostasis modulator protein 6 (315 aa).

Residues Met1–Gly21 are Cytoplasmic-facing. Residues Leu22–Val37 traverse the membrane as a helical segment. At Ala38–Ala46 the chain is on the extracellular side. Cystine bridges form between Cys41–Cys126, Cys43–Cys155, and Cys139–Cys146. A helical membrane pass occupies residues Trp47–Tyr68. At Val69–Ile102 the chain is on the cytoplasmic side. The helical transmembrane segment at Ser103 to Ala127 threads the bilayer. Topologically, residues Ala128 to Asp169 are extracellular. A helical membrane pass occupies residues Leu170–Phe192. Residues Thr193 to Leu315 are Cytoplasmic-facing.

This sequence belongs to the CALHM family. Oligomerizes to form decameric and undecameric channels. Post-translationally, N-glycosylated. In terms of tissue distribution, placenta.

It is found in the cell membrane. The catalysed reaction is ATP(in) = ATP(out). Its function is as follows. Pore-forming subunit of an ATP-permeable channel. In response to pathogen-derived and proinflammatory stimuli, relocates from intracellular compartments to NK-dendritic cell and NK-macrophage immune synapses where it mediates ATP efflux and NK cell activation involved in antimicrobial and antitumor responses. May assemble to form gap junction channel-like structures with gating and ion conductance likely regulated by membrane lipids and voltage rather than by extracellular calcium levels. In Homo sapiens (Human), this protein is Calcium homeostasis modulator protein 6.